Here is a 333-residue protein sequence, read N- to C-terminus: Ketol-acid reductoisomerase (NADP(+)) (333 aa).

A KARI N-terminal Rossmann domain is found at 6–186 (TRVYTECDAD…GALRAGAIQT (181 aa)). Residues 29 to 32 (YGSQ), Lys-52, Ser-55, Ser-57, and 87 to 90 (DPAQ) each bind NADP(+). Residue His-112 is part of the active site. Gly-138 is an NADP(+) binding site. The region spanning 187–332 (TFTEETETDL…ARLRALFSWS (146 aa)) is the KARI C-terminal knotted domain. Positions 195, 199, 231, and 235 each coordinate Mg(2+). Ser-256 contributes to the substrate binding site.

Belongs to the ketol-acid reductoisomerase family. It depends on Mg(2+) as a cofactor.

The enzyme catalyses (2R)-2,3-dihydroxy-3-methylbutanoate + NADP(+) = (2S)-2-acetolactate + NADPH + H(+). It carries out the reaction (2R,3R)-2,3-dihydroxy-3-methylpentanoate + NADP(+) = (S)-2-ethyl-2-hydroxy-3-oxobutanoate + NADPH + H(+). The protein operates within amino-acid biosynthesis; L-isoleucine biosynthesis; L-isoleucine from 2-oxobutanoate: step 2/4. It participates in amino-acid biosynthesis; L-valine biosynthesis; L-valine from pyruvate: step 2/4. Involved in the biosynthesis of branched-chain amino acids (BCAA). Catalyzes an alkyl-migration followed by a ketol-acid reduction of (S)-2-acetolactate (S2AL) to yield (R)-2,3-dihydroxy-isovalerate. In the isomerase reaction, S2AL is rearranged via a Mg-dependent methyl migration to produce 3-hydroxy-3-methyl-2-ketobutyrate (HMKB). In the reductase reaction, this 2-ketoacid undergoes a metal-dependent reduction by NADPH to yield (R)-2,3-dihydroxy-isovalerate. The polypeptide is Ketol-acid reductoisomerase (NADP(+)) (Tropheryma whipplei (strain Twist) (Whipple's bacillus)).